The sequence spans 100 residues: EKC/KEOPS complex subunit GON7 (100 aa).

An N-acetylmethionine modification is found at Met-1. The disordered stretch occupies residues 50–100; that stretch reads SPVQGEAQDRVAAAPEEALDGDDEDDAEDENNIDNRTNSDGPTAKRPKPPS. Over residues 66-81 the composition is skewed to acidic residues; the sequence is EALDGDDEDDAEDENN.

In terms of assembly, component of the EKC/KEOPS complex composed of at least GON7, TP53RK, TPRKB, OSGEP and LAGE3; the whole complex dimerizes.

The protein resides in the nucleus. Its function is as follows. Component of the EKC/KEOPS complex that is required for the formation of a threonylcarbamoyl group on adenosine at position 37 (t(6)A37) in tRNAs that read codons beginning with adenine. The complex is probably involved in the transfer of the threonylcarbamoyl moiety of threonylcarbamoyl-AMP (TC-AMP) to the N6 group of A37. GON7 plays a supporting role to the catalytic subunit OSGEP in the complex. The protein is EKC/KEOPS complex subunit GON7 of Sus scrofa (Pig).